Consider the following 165-residue polypeptide: Protein NKG7 (165 aa).

A run of 4 helical transmembrane segments spans residues 9 to 29, 61 to 81, 92 to 112, and 133 to 153; these read LLGG…DFWF, FSIM…LSCF, LVST…MAVY, and FYLG…SLGA.

Belongs to the PMP-22/EMP/MP20 family. As to expression, expressed in activated T-cells, in kidney, liver, lung and pancreas. Not expressed in brain, heart, or skeletal muscle. Expressed at high levels in TCR gamma delta-expressing CTL clones, and in some TCR alpha beta-expressing CTL clones (both CD4+ and CD8+), but is not expressed in other TCR alpha beta-expressing CTL clones and in cell lines representing B-cells, monocytes, and myeloid cells.

It localises to the cell membrane. The protein localises to the cytolytic granule membrane. Its function is as follows. Regulates cytotoxic granule exocytosis in effector lymphocytes, thus acting as a critical mediator of inflammation in a broad range of infectious and non-infectious diseases. Essential for cytotoxic degranulation of natural killer (NK) cells and CD8(+) T-cells and for the activation of CD4(+) T-cells following infection. Plays a critical role in CD8(+) T-cell and NK cell-mediated cytolysis of target cells and contributes to the cytolytic activity via the perforin/granzyme pathway by enhancing exocytosis of LAMP1-carrying lytic granules. Contributes to NK cell-mediated control of cancer metastasis. The chain is Protein NKG7 (NKG7) from Homo sapiens (Human).